A 212-amino-acid chain; its full sequence is Fe/S biogenesis protein NfuA (212 aa).

Positions 169 and 172 each coordinate [4Fe-4S] cluster.

It belongs to the NfuA family. In terms of assembly, homodimer. [4Fe-4S] cluster is required as a cofactor.

Involved in iron-sulfur cluster biogenesis. Binds a 4Fe-4S cluster, can transfer this cluster to apoproteins, and thereby intervenes in the maturation of Fe/S proteins. Could also act as a scaffold/chaperone for damaged Fe/S proteins. The polypeptide is Fe/S biogenesis protein NfuA (Acinetobacter baumannii (strain AB307-0294)).